The following is a 707-amino-acid chain: Metal transporter CNNM3 (707 aa).

Residues 11-27 traverse the membrane as a helical segment; the sequence is LGWLFAALCLGNAAGEA. The N-linked (GlcNAc...) asparagine glycan is linked to Asn-73. The 179-residue stretch at 130 to 308 folds into the CNNM transmembrane domain; it reads EAAPPWALGL…DPYSDLSKGV (179 aa). 3 helical membrane-spanning segments follow: residues 193–213, 221–241, and 261–281; these read CALG…AVLL, AVPA…VVPA, and LAVL…ELAA. 2 CBS domains span residues 318–379 and 386–452; these read LTPL…CTPL and YNHP…ILDE. Ser-661 carries the phosphoserine modification. The span at 678–691 shows a compositional bias: polar residues; sequence LGEKTTTAAGSSHS. The tract at residues 678–707 is disordered; sequence LGEKTTTAAGSSHSRPGVPVEGSPGRNPGV. Ser-700 is modified (phosphoserine).

Belongs to the ACDP family. As to expression, widely expressed. Expressed at higher level in heart and spleen.

The protein resides in the cell membrane. Its function is as follows. Probable metal transporter. The polypeptide is Metal transporter CNNM3 (CNNM3) (Homo sapiens (Human)).